The chain runs to 173 residues: N-alpha-acetyltransferase 20 (173 aa).

The region spanning 2–151 (TTIRRFVCDD…DALDMRKALP (150 aa)) is the N-acetyltransferase domain.

The protein belongs to the acetyltransferase family. ARD1 subfamily.

Functionally, seems to be involved in N-acetylation. The sequence is that of N-alpha-acetyltransferase 20 (nat5) from Dictyostelium discoideum (Social amoeba).